A 29-amino-acid chain; its full sequence is Galanin (29 aa).

Residue alanine 29 is modified to Alanine amide.

This sequence belongs to the galanin family.

Its subcellular location is the secreted. Contracts smooth muscle of the gastrointestinal and genitourinary tract, regulates growth hormone release, modulates insulin release, and may be involved in the control of adrenal secretion. The sequence is that of Galanin (gal) from Oncorhynchus mykiss (Rainbow trout).